A 364-amino-acid polypeptide reads, in one-letter code: D-alanine--D-alanine ligase (364 aa).

Residues 145–354 form the ATP-grasp domain; sequence KMAFEQAGLP…FPELVDKLVQ (210 aa). 181–236 provides a ligand contact to ATP; sequence EASLGYPCFVKPANLGSSVGISKVRSRQELEDALDNAANYDRRIIIEAGVAAREVE. Positions 307, 321, and 323 each coordinate Mg(2+).

Belongs to the D-alanine--D-alanine ligase family. It depends on Mg(2+) as a cofactor. Mn(2+) is required as a cofactor.

The protein localises to the cytoplasm. It catalyses the reaction 2 D-alanine + ATP = D-alanyl-D-alanine + ADP + phosphate + H(+). Its pathway is cell wall biogenesis; peptidoglycan biosynthesis. Cell wall formation. The chain is D-alanine--D-alanine ligase from Nostoc sp. (strain PCC 7120 / SAG 25.82 / UTEX 2576).